A 275-amino-acid chain; its full sequence is uncharacterized protein (275 aa).

Over residues 148–158 (TFPTTAPSITP) the composition is skewed to polar residues. Residues 148–173 (TFPTTAPSITPGNKEGEKTTSTDTDE) are disordered. The helical transmembrane segment at 187–207 (ILIAVTLLLSGVAIIVFVIFE) threads the bilayer. Positions 234 to 264 (GQPPGTAESKPDSQPQKVGQDAANSSNPKKA) are disordered. The span at 245-261 (DSQPQKVGQDAANSSNP) shows a compositional bias: polar residues.

It localises to the membrane. This is an uncharacterized protein from Homo sapiens (Human).